Consider the following 355-residue polypeptide: Peptide chain release factor 1 (355 aa).

Q233 bears the N5-methylglutamine mark.

Belongs to the prokaryotic/mitochondrial release factor family. Methylated by PrmC. Methylation increases the termination efficiency of RF1.

Its subcellular location is the cytoplasm. Peptide chain release factor 1 directs the termination of translation in response to the peptide chain termination codons UAG and UAA. This Caldicellulosiruptor saccharolyticus (strain ATCC 43494 / DSM 8903 / Tp8T 6331) protein is Peptide chain release factor 1.